Consider the following 591-residue polypeptide: Thiamine transporter thi9 (591 aa).

The segment covering methionine 1–serine 22 has biased composition (polar residues). A disordered region spans residues methionine 1 to proline 42. A run of 5 helical transmembrane segments spans residues leucine 98 to valine 118, isoleucine 342 to phenylalanine 362, valine 397 to alanine 417, isoleucine 450 to alanine 470, and tyrosine 545 to proline 565. Residue serine 585 is modified to Phosphoserine.

This sequence belongs to the amino acid-polyamine-organocation (APC) superfamily.

Its subcellular location is the endoplasmic reticulum membrane. The protein resides in the cell membrane. In terms of biological role, thiamine transporter involved in the cellular uptake of thiamine. Pyrithiamine, oxythiamine, amprolium, and the thiazole part of thiamine have been shown to be also substrates of thi9. The protein is Thiamine transporter thi9 (thi9) of Schizosaccharomyces pombe (strain 972 / ATCC 24843) (Fission yeast).